The sequence spans 429 residues: 3-phosphoshikimate 1-carboxyvinyltransferase (429 aa).

Positions 23, 24, and 28 each coordinate 3-phosphoshikimate. Residue Lys-23 coordinates phosphoenolpyruvate. 2 residues coordinate phosphoenolpyruvate: Gly-95 and Arg-123. 3-phosphoshikimate contacts are provided by Ser-168, Gln-170, Asp-316, and Lys-343. Phosphoenolpyruvate is bound at residue Gln-170. Catalysis depends on Asp-316, which acts as the Proton acceptor. Arg-347 and Arg-389 together coordinate phosphoenolpyruvate.

It belongs to the EPSP synthase family. Monomer.

Its subcellular location is the cytoplasm. It catalyses the reaction 3-phosphoshikimate + phosphoenolpyruvate = 5-O-(1-carboxyvinyl)-3-phosphoshikimate + phosphate. The protein operates within metabolic intermediate biosynthesis; chorismate biosynthesis; chorismate from D-erythrose 4-phosphate and phosphoenolpyruvate: step 6/7. Its function is as follows. Catalyzes the transfer of the enolpyruvyl moiety of phosphoenolpyruvate (PEP) to the 5-hydroxyl of shikimate-3-phosphate (S3P) to produce enolpyruvyl shikimate-3-phosphate and inorganic phosphate. This chain is 3-phosphoshikimate 1-carboxyvinyltransferase, found in Bacillus thuringiensis subsp. konkukian (strain 97-27).